Consider the following 223-residue polypeptide: Deoxyribose-phosphate aldolase (223 aa).

D89 (proton donor/acceptor) is an active-site residue. Residue K152 is the Schiff-base intermediate with acetaldehyde of the active site. The active-site Proton donor/acceptor is K181.

It belongs to the DeoC/FbaB aldolase family. DeoC type 1 subfamily.

Its subcellular location is the cytoplasm. It catalyses the reaction 2-deoxy-D-ribose 5-phosphate = D-glyceraldehyde 3-phosphate + acetaldehyde. It participates in carbohydrate degradation; 2-deoxy-D-ribose 1-phosphate degradation; D-glyceraldehyde 3-phosphate and acetaldehyde from 2-deoxy-alpha-D-ribose 1-phosphate: step 2/2. Catalyzes a reversible aldol reaction between acetaldehyde and D-glyceraldehyde 3-phosphate to generate 2-deoxy-D-ribose 5-phosphate. The protein is Deoxyribose-phosphate aldolase of Bacillus subtilis (strain 168).